The following is a 553-amino-acid chain: Telomere repeat-binding protein 2 (553 aa).

The tract at residues 147–170 (SSTEVGACGNGSPNESRDDVNLFS) is disordered. The 80-residue stretch at 285–364 (VKLRIKSFRV…HLDSLGFSLE (80 aa)) folds into the Ubiquitin-like domain. The segment at 394–413 (ALDSSHEPEPSPADSFGKLG) is disordered. The 60-residue stretch at 448–507 (AQRRIRRPFSVTEVEALVQAVEKLGTGRWRDVKVRAFEDADHRTYVDLKDKWKTLVHTAR) folds into the HTH myb-type domain. A DNA-binding region (H-T-H motif) is located at residues 476-503 (WRDVKVRAFEDADHRTYVDLKDKWKTLV).

As to quaternary structure, homodimer and heterodimer with TRP1. Interacts with SNL1. Expressed ubiquitously. Highest expression in flowers and leaves.

It is found in the nucleus. Binds specifically to the plant telomeric double-stranded DNA sequences. At least 2 repeats of telomeric sequences are required for binding. Induces DNA bending. The protein is Telomere repeat-binding protein 2 (TRP2) of Arabidopsis thaliana (Mouse-ear cress).